Consider the following 251-residue polypeptide: Phosphate import ATP-binding protein PstB (251 aa).

An ABC transporter domain is found at 5–246 (IKIRGVNFFY…PKDKRTEDYI (242 aa)). 37–44 (GPSGCGKS) is an ATP binding site.

This sequence belongs to the ABC transporter superfamily. Phosphate importer (TC 3.A.1.7) family. The complex is composed of two ATP-binding proteins (PstB), two transmembrane proteins (PstC and PstA) and a solute-binding protein (PstS).

Its subcellular location is the cell membrane. It catalyses the reaction phosphate(out) + ATP + H2O = ADP + 2 phosphate(in) + H(+). In terms of biological role, part of the ABC transporter complex PstSACB involved in phosphate import. Responsible for energy coupling to the transport system. This is Phosphate import ATP-binding protein PstB from Dehalococcoides mccartyi (strain ATCC BAA-2266 / KCTC 15142 / 195) (Dehalococcoides ethenogenes (strain 195)).